The chain runs to 92 residues: Large ribosomal subunit protein eL43 (92 aa).

Zn(2+) is bound by residues C39, C42, C57, and C60. The segment at 39 to 60 adopts a C4-type zinc-finger fold; that stretch reads CSFCGKTKMKRRAVGIWHCGSC.

This sequence belongs to the eukaryotic ribosomal protein eL43 family. As to quaternary structure, component of the large ribosomal subunit.

It localises to the cytoplasm. Its function is as follows. Component of the large ribosomal subunit. The ribosome is a large ribonucleoprotein complex responsible for the synthesis of proteins in the cell. The polypeptide is Large ribosomal subunit protein eL43 (rpl37a) (Ictalurus punctatus (Channel catfish)).